The chain runs to 185 residues: Photosystem I assembly protein Ycf4 (185 aa).

2 helical membrane-spanning segments follow: residues 20–40 and 57–77; these read GNFF…AVGA and ILFF…LFIS.

The protein belongs to the Ycf4 family.

It is found in the plastid. Its subcellular location is the chloroplast thylakoid membrane. Its function is as follows. Seems to be required for the assembly of the photosystem I complex. This chain is Photosystem I assembly protein Ycf4, found in Oryza nivara (Indian wild rice).